The chain runs to 400 residues: Acetylornithine aminotransferase (400 aa).

Pyridoxal 5'-phosphate-binding positions include 106 to 107 (GA) and Phe-132. Residue Arg-135 participates in N(2)-acetyl-L-ornithine binding. 217 to 220 (DEVQ) provides a ligand contact to pyridoxal 5'-phosphate. Residue Lys-246 is modified to N6-(pyridoxal phosphate)lysine. N(2)-acetyl-L-ornithine is bound at residue Ser-274. Residue Thr-275 participates in pyridoxal 5'-phosphate binding.

Belongs to the class-III pyridoxal-phosphate-dependent aminotransferase family. ArgD subfamily. Homodimer. It depends on pyridoxal 5'-phosphate as a cofactor.

It is found in the cytoplasm. The enzyme catalyses N(2)-acetyl-L-ornithine + 2-oxoglutarate = N-acetyl-L-glutamate 5-semialdehyde + L-glutamate. Its pathway is amino-acid biosynthesis; L-arginine biosynthesis; N(2)-acetyl-L-ornithine from L-glutamate: step 4/4. The polypeptide is Acetylornithine aminotransferase (Streptomyces clavuligerus).